We begin with the raw amino-acid sequence, 120 residues long: Secreted RxLR effector protein 29 (120 aa).

The N-terminal stretch at M1–S21 is a signal peptide. The RxLR-dEER motif lies at R47–K64.

It belongs to the RxLR effector family.

It localises to the secreted. The protein localises to the host cytoplasm. It is found in the host nucleus. Functionally, effector that acts as a broad suppressor of cell death to interrupt plant immunity. Inhibits cell death induced by cell death-inducing proteins, including the PAMP elicitor INF1 from P.infestans. This chain is Secreted RxLR effector protein 29, found in Plasmopara viticola (Downy mildew of grapevine).